We begin with the raw amino-acid sequence, 51 residues long: MRDKIKLVSTAGTGHFYTTTKNKKTTPDKLEMKKFDPKVRKHVMYREDKIK.

This sequence belongs to the bacterial ribosomal protein bL33 family.

This chain is Large ribosomal subunit protein bL33, found in Acidithiobacillus ferrooxidans (strain ATCC 53993 / BNL-5-31) (Leptospirillum ferrooxidans (ATCC 53993)).